The chain runs to 142 residues: Peptide methionine sulfoxide reductase MsrB (142 aa).

One can recognise a MsrB domain in the interval 2-125 (IKKDKNELNE…NSAAIQFIPY (124 aa)). Cys114 acts as the Nucleophile in catalysis.

The protein belongs to the MsrB Met sulfoxide reductase family.

The enzyme catalyses L-methionyl-[protein] + [thioredoxin]-disulfide + H2O = L-methionyl-(R)-S-oxide-[protein] + [thioredoxin]-dithiol. This is Peptide methionine sulfoxide reductase MsrB from Staphylococcus haemolyticus (strain JCSC1435).